A 666-amino-acid polypeptide reads, in one-letter code: Non-receptor tyrosine-protein kinase TNK1 (666 aa).

Residue Ser-96 is modified to Phosphoserine. Positions 116–383 (VRRGELLGSG…LEGLLQEAWL (268 aa)) constitute a Protein kinase domain. ATP contacts are provided by residues 122 to 130 (LGSGCFGVV) and Lys-148. Residue Asp-245 is the Proton acceptor of the active site. Ser-255 carries the post-translational modification Phosphoserine. One can recognise an SH3 domain in the interval 381-441 (AWLSEGRCVR…PASAVTLADL (61 aa)). The disordered stretch occupies residues 442–589 (GGSPVTHPAH…VPSGGPLSDP (148 aa)). The span at 457–473 (HGEKCRGGTDGDREKAT) shows a compositional bias: basic and acidic residues. Residue Ser-498 is modified to Phosphoserine. Thr-510 is subject to Phosphothreonine. Ser-515 is subject to Phosphoserine. Residues 531-544 (DLPPRPPDLPPRPP) are compositionally biased toward pro residues. At Ser-582 the chain carries Phosphoserine.

It belongs to the protein kinase superfamily. Tyr protein kinase family. In terms of assembly, interacts with the SH3 domain of PLCG1 via its Pro-rich domain. In terms of processing, autophosphorylated on tyrosine residues. As to expression, expressed in whole embryo and all adult tissues examined including liver, kidney, heart, brain, skeletal muscle and intestine. Also detected in various myeloid- and lymphoid-derived cell lines.

It is found in the membrane. It localises to the cytoplasm. The catalysed reaction is L-tyrosyl-[protein] + ATP = O-phospho-L-tyrosyl-[protein] + ADP + H(+). May function in signaling pathways utilized broadly during fetal development and more selectively in adult tissues and in cells of the lymphohematopoietic system. Could specifically be involved in phospholipid signal transduction. Involved in negative regulation of cell growth. Has tumor suppressor properties. Plays a negative regulatory role in the Ras-MAPK pathway. This Mus musculus (Mouse) protein is Non-receptor tyrosine-protein kinase TNK1.